The sequence spans 124 residues: Immunoglobulin lambda variable 5-52 (124 aa).

Positions 1 to 19 (MAWTLLLLVLLSHCTGSLS) are cleaved as a signal peptide. The segment at 20 to 44 (QPVLTQPSSHSASSGASVRLTCMLS) is framework-1. The Ig-like domain occupies 21-124 (PVLTQPSSHS…CGTWHSNSKT (104 aa)). C41 and C115 form a disulfide bridge. Positions 45-53 (SGFSVGDFW) are complementarity-determining-1. Positions 54 to 70 (IRWYQQKPGNPPRYLLY) are framework-2. Residues 71–77 (YHSDSNK) form a complementarity-determining-2 region. The tract at residues 78 to 115 (GQGSGVPSRFSGSNDASANAGILRISGLQPEDEADYYC) is framework-3. The interval 116–124 (GTWHSNSKT) is complementarity-determining-3.

As to quaternary structure, immunoglobulins are composed of two identical heavy chains and two identical light chains; disulfide-linked.

It is found in the secreted. It localises to the cell membrane. Functionally, v region of the variable domain of immunoglobulin light chains that participates in the antigen recognition. Immunoglobulins, also known as antibodies, are membrane-bound or secreted glycoproteins produced by B lymphocytes. In the recognition phase of humoral immunity, the membrane-bound immunoglobulins serve as receptors which, upon binding of a specific antigen, trigger the clonal expansion and differentiation of B lymphocytes into immunoglobulins-secreting plasma cells. Secreted immunoglobulins mediate the effector phase of humoral immunity, which results in the elimination of bound antigens. The antigen binding site is formed by the variable domain of one heavy chain, together with that of its associated light chain. Thus, each immunoglobulin has two antigen binding sites with remarkable affinity for a particular antigen. The variable domains are assembled by a process called V-(D)-J rearrangement and can then be subjected to somatic hypermutations which, after exposure to antigen and selection, allow affinity maturation for a particular antigen. The chain is Immunoglobulin lambda variable 5-52 from Homo sapiens (Human).